Consider the following 140-residue polypeptide: Profilin-1 (140 aa).

N-acetylalanine is present on Ala-2. The residue at position 28 (Ser-28) is a Phosphoserine. Lys-54 is covalently cross-linked (Glycyl lysine isopeptide (Lys-Gly) (interchain with G-Cter in SUMO2); alternate). Lys-54 participates in a covalent cross-link: Glycyl lysine isopeptide (Lys-Gly) (interchain with G-Cter in ubiquitin); alternate. Residue Ser-57 is modified to Phosphoserine. Lys-108 carries the N6-acetyllysine modification. Position 129 is a phosphotyrosine (Tyr-129). At Ser-138 the chain carries Phosphoserine; by ROCK1.

Belongs to the profilin family. In terms of assembly, found in a complex with XPO6, Ran, ACTB and PFN1. Interacts with ACTB. Interacts with VASP. Interacts with HTT. Interacts with SH3BGRL. Occurs in many kinds of cells as a complex with monomeric actin in a 1:1 ratio. Interacts with ACTMAP. Phosphorylation at Ser-138 reduces its affinity for G-actin and blocks its interaction with HTT, reducing its ability to inhibit androgen receptor (AR) and HTT aggregation.

It localises to the cytoplasm. The protein localises to the cytoskeleton. Binds to actin and affects the structure of the cytoskeleton. At high concentrations, profilin prevents the polymerization of actin, whereas it enhances it at low concentrations. By binding to PIP2, it inhibits the formation of IP3 and DG. Inhibits androgen receptor (AR) and HTT aggregation and binding of G-actin is essential for its inhibition of AR. This Bos taurus (Bovine) protein is Profilin-1 (PFN1).